Here is a 337-residue protein sequence, read N- to C-terminus: Terpene synthase 4 (337 aa).

Residues aspartate 94 and aspartate 98 each coordinate Mg(2+). Positions 94-98 (DDIFD) match the D(D/E)XX(D/E) motif motif. A substrate-binding site is contributed by arginine 195. Positions 241, 245, and 249 each coordinate Mg(2+). Residues 241-249 (NDIYSYHRE) carry the NSE motif motif. Positions 320–327 (WSESCTRY) match the WxxxxxRY motif motif.

It belongs to the terpene synthase family. It depends on Mg(2+) as a cofactor.

It catalyses the reaction (2E,6E)-farnesyl diphosphate = alpha-muurolene + diphosphate. The catalysed reaction is (2E,6E)-farnesyl diphosphate = (-)-(E)-beta-caryophyllene + diphosphate. In terms of biological role, terpene synthase that catalyzes the cyclization of farnesyl diphosphate (FPP) into alpha-muurolene, (-)-beta-caryophyllene, and one unidentified sesquiterpene. TPS4 shows only trace monoterpene synthase activity with geranyl diphosphate (GPP) as substrate and produces very small amounts of myrcene. P.polycephalum has a unique biology and these volatile terpenoids could function in internal communication of P.polycephalum, to mark the territory that have been explored, or they may be involved in chemotaxis. This chain is Terpene synthase 4, found in Physarum polycephalum (Slime mold).